The following is a 595-amino-acid chain: Apolipoprotein N-acyltransferase 2 (595 aa).

Transmembrane regions (helical) follow at residues 30–50, 63–83, 95–115, 167–187, and 210–230; these read FLAFAPVSLTHFVWIAPFGFF, LFFHGLLIGVVFYAISFHWII, VVAILILLFAGLLFGLKFPIF, AEITGVYGISFLVFIVSYTLF, and FITLPALLLLTFIVSGIFLFK. The CN hydrolase domain maps to 241-555; that stretch reads LNVLIVQPDA…AEALSETIDV (315 aa). Glu-293 functions as the Proton acceptor in the catalytic mechanism. The active site involves Lys-372. Cys-463 acts as the Nucleophile in catalysis. A helical membrane pass occupies residues 569–589; it reads LIPWLMLFLTGIYYLNLLIGI.

It belongs to the CN hydrolase family. Apolipoprotein N-acyltransferase subfamily.

The protein resides in the cell inner membrane. It catalyses the reaction N-terminal S-1,2-diacyl-sn-glyceryl-L-cysteinyl-[lipoprotein] + a glycerophospholipid = N-acyl-S-1,2-diacyl-sn-glyceryl-L-cysteinyl-[lipoprotein] + a 2-acyl-sn-glycero-3-phospholipid + H(+). Its pathway is protein modification; lipoprotein biosynthesis (N-acyl transfer). In terms of biological role, catalyzes the phospholipid dependent N-acylation of the N-terminal cysteine of apolipoprotein, the last step in lipoprotein maturation. In Leptospira interrogans serogroup Icterohaemorrhagiae serovar copenhageni (strain Fiocruz L1-130), this protein is Apolipoprotein N-acyltransferase 2.